We begin with the raw amino-acid sequence, 254 residues long: Enolase-phosphatase E1 (254 aa).

2 residues coordinate Mg(2+): Asp13 and Glu15. Substrate contacts are provided by residues 127–128 and Lys173; that span reads SS. Asp200 lines the Mg(2+) pocket.

Belongs to the HAD-like hydrolase superfamily. MasA/MtnC family. Monomer. Mg(2+) is required as a cofactor.

It is found in the cytoplasm. The protein resides in the nucleus. The catalysed reaction is 5-methylsulfanyl-2,3-dioxopentyl phosphate + H2O = 1,2-dihydroxy-5-(methylsulfanyl)pent-1-en-3-one + phosphate. The protein operates within amino-acid biosynthesis; L-methionine biosynthesis via salvage pathway; L-methionine from S-methyl-5-thio-alpha-D-ribose 1-phosphate: step 3/6. Its pathway is amino-acid biosynthesis; L-methionine biosynthesis via salvage pathway; L-methionine from S-methyl-5-thio-alpha-D-ribose 1-phosphate: step 4/6. Bifunctional enzyme that catalyzes the enolization of 2,3-diketo-5-methylthiopentyl-1-phosphate (DK-MTP-1-P) into the intermediate 2-hydroxy-3-keto-5-methylthiopentenyl-1-phosphate (HK-MTPenyl-1-P), which is then dephosphorylated to form the acireductone 1,2-dihydroxy-3-keto-5-methylthiopentene (DHK-MTPene). The polypeptide is Enolase-phosphatase E1 (utr4) (Sclerotinia sclerotiorum (strain ATCC 18683 / 1980 / Ss-1) (White mold)).